Consider the following 323-residue polypeptide: Olfactory receptor 1E2 (323 aa).

The Extracellular portion of the chain corresponds to 1 to 25 (MMGQNQTSISDFLLLGLPIQPEQQN). An N-linked (GlcNAc...) asparagine glycan is attached at asparagine 5. Residues 26 to 49 (LCYALFLAMYLTTLLGNLLIIVLI) form a helical membrane-spanning segment. Over 50 to 57 (RLDSHLHT) the chain is Cytoplasmic. The chain crosses the membrane as a helical span at residues 58-79 (PVYLFLSNLSFSDLCFSSVTMP). The Extracellular segment spans residues 80-100 (KLLQNMQNQDPSIPYADCLTQ). A disulfide bond links cysteine 97 and cysteine 198. Residues 101-120 (MYFFLYFSDLESFLLVAMAY) form a helical membrane-spanning segment. Topologically, residues 121–148 (DRYVAICFPMHYTAICFLLHYTAIMSPM) are cytoplasmic. A helical transmembrane segment spans residues 149–167 (LCLSVVALSWVLTTFHAML). Topologically, residues 168-205 (HTLLMARLCFCADNVIPHFFCDMSALLKLACSDTRVNE) are extracellular. Residues 206–228 (WVIFIMGGLILVIPFLLILGSYA) form a helical membrane-spanning segment. Topologically, residues 229-245 (RIVSSILKVPSSKGICK) are cytoplasmic. The chain crosses the membrane as a helical span at residues 246–269 (AFSTCGSHLSVVSLFYGTVIGLYL). Residues 270–281 (CPSANSSTLKDT) lie on the Extracellular side of the membrane. The N-linked (GlcNAc...) asparagine glycan is linked to asparagine 274. Residues 282–301 (VMAMMYTVVTPMLTPFIYSL) traverse the membrane as a helical segment. Residues 302–323 (RNRDMKGALERVICKRKNPFLL) lie on the Cytoplasmic side of the membrane.

Belongs to the G-protein coupled receptor 1 family.

The protein localises to the cell membrane. In terms of biological role, odorant receptor. The chain is Olfactory receptor 1E2 (OR1E2) from Homo sapiens (Human).